Here is a 260-residue protein sequence, read N- to C-terminus: Coiled-coil domain-containing protein 127 (260 aa).

Positions E47 to Q135 form a coiled coil.

The polypeptide is Coiled-coil domain-containing protein 127 (Ccdc127) (Rattus norvegicus (Rat)).